Consider the following 170-residue polypeptide: Protein SprT (170 aa).

Positions 19-163 (REKLQQANLR…RCLHCGTSLR (145 aa)) constitute a SprT-like domain. Residue His78 coordinates Zn(2+). Residue Glu79 is part of the active site. Residue His82 coordinates Zn(2+).

This sequence belongs to the SprT family. Zn(2+) serves as cofactor.

The protein resides in the cytoplasm. The sequence is that of Protein SprT from Erwinia tasmaniensis (strain DSM 17950 / CFBP 7177 / CIP 109463 / NCPPB 4357 / Et1/99).